We begin with the raw amino-acid sequence, 3902 residues long: Mediator of RNA polymerase II transcription subunit 12 (3902 aa).

Disordered regions lie at residues 414–576 (ESLT…EELP), 619–674 (FEPF…NPKL), 694–940 (AFDP…LEAL), 977–1029 (VVEK…PEPP), 1812–1831 (TSHKTKDVKRKSANKTTETR), 2463–2675 (TVEP…NRKQ), 2719–2771 (AGAS…SSSM), 2876–3151 (RIME…PEMQ), 3195–3549 (LQAG…SSNQ), and 3563–3902 (AGLN…QQQY). Positions 420-430 (EPEEDPEEGPE) are enriched in acidic residues. Pro residues predominate over residues 709-721 (PTPPEAPPPPPPV). Basic and acidic residues-rich tracts occupy residues 740–802 (EDGK…EHLN), 912–928 (KAGDDASKKTKEGKKPD), 977–1004 (VVEKDKDKTPEKATEGEKEAEKDAEKLP), and 1018–1027 (KTPEKPKTPE). The segment covering 1812 to 1824 (TSHKTKDVKRKSA) has biased composition (basic residues). Residues 2409–3902 (QTTRLDKVAK…MGQFPNQQQY (1494 aa)) are required for nuclear localization. The segment covering 2474 to 2547 (AAVKKPEEET…VTAKDTEKDT (74 aa)) has biased composition (basic and acidic residues). Residues 2480–2526 (EEETAEKKKDEAKKADEKTTKADDEKKKDETADAKKDNEKQKEEKDK) adopt a coiled-coil conformation. Low complexity-rich tracts occupy residues 2548–2566 (AAPTDAAKAAAAPVAAAPD), 2614–2632 (SRANANAETAAAAETSSTT), and 2734–2748 (PHPGMQHQSGMQHQG). A compositionally biased stretch (basic and acidic residues) spans 2876–2979 (RIMEEQRILR…ERLERERVAR (104 aa)). Composition is skewed to low complexity over residues 2980-3001 (EALAAQQAQQAQQAQQAQQAQQ), 3010-3143 (QQQR…QRNP), 3196-3205 (QAGQAAGQQQ), and 3226-3236 (PQQQQQQPQQP). Polar residues predominate over residues 3237–3248 (GTSQIPNTTPTR). Composition is skewed to low complexity over residues 3250–3275 (ANPMQGQQQQAGMQNYQNQPVLGQPG), 3284–3295 (GQQQQNQFQRQG), and 3317–3389 (GQQQ…FGRQ). Polar residues predominate over residues 3391-3409 (APNQENFQQQPGFNQNAAG). Low complexity-rich tracts occupy residues 3410–3446 (QNYQRPEQQQQSQNQWNQLNQQMRPQQPQQPSQQQQN), 3454–3539 (QSQQ…QGNQ), and 3570–3619 (SSGN…RPGM). Gly residues predominate over residues 3620–3649 (GQQGMGQQGMGQQGGMGQSGRGQPGMGGQS). Composition is skewed to low complexity over residues 3663–3700 (MGQPGMQQSGMQQQHGMQQQQPGAQQSGLQQAGMQQQH), 3710–3742 (QQGRNNYGSMGQQGQQSGQQQAQQHQQMSQQAQ), and 3760–3830 (QQQQ…HRGQ). The span at 3831 to 3841 (GQQGHGMGGAG) shows a compositional bias: gly residues. A compositionally biased stretch (low complexity) spans 3842–3888 (QQHQQVPQQQQNQYFQPQQQQDQRMQQQPGGQQQQQQGQSGQQQNNQ). The segment covering 3889–3902 (HYNNMGQFPNQQQY) has biased composition (polar residues).

It belongs to the Mediator complex subunit 12 family. In terms of assembly, component of the Mediator complex.

Its subcellular location is the nucleus. Component of the Mediator complex, a coactivator involved in regulated gene transcription of nearly all RNA polymerase II-dependent genes. Mediator functions as a bridge to convey information from gene-specific regulatory proteins to the basal RNA polymerase II transcription machinery. Mediator is recruited to promoters by direct interactions with regulatory proteins and serves as a scaffold for the assembly of a functional preinitiation complex with RNA polymerase II and the general transcription factors. The chain is Mediator of RNA polymerase II transcription subunit 12 (dpy-22) from Caenorhabditis briggsae.